The primary structure comprises 441 residues: Carbohydrate sulfotransferase 3 (441 aa).

Residues Met-1–Arg-4 are Cytoplasmic-facing. A helical; Signal-anchor for type II membrane protein transmembrane segment spans residues Ser-5–Glu-21. Residues Lys-22 to Thr-441 lie on the Lumenal side of the membrane. Residues Asn-47 and Asn-58 are each glycosylated (N-linked (GlcNAc...) asparagine). A 3'-phosphoadenylyl sulfate-binding site is contributed by Thr-106–Phe-112. Asn-221 carries an N-linked (GlcNAc...) asparagine glycan. Position 266-274 (Arg-266–Ser-274) interacts with 3'-phosphoadenylyl sulfate. A glycan (N-linked (GlcNAc...) asparagine) is linked at Asn-427.

It belongs to the sulfotransferase 1 family. Gal/GlcNAc/GalNAc subfamily. Post-translationally, N-glycosylated. As to expression, in electric organ, it is moderately expressed in spinal cord and electric lobe and undetectable in non-neural tissues. Expressed in a punctate distribution in the innervated portion of electrocytes. In the CNS, it is localized within the somas of motor neurons and neurons of the electromotor nucleus.

It is found in the golgi apparatus membrane. The enzyme catalyses chondroitin beta-D-glucuronate + n 3'-phosphoadenylyl sulfate = chondroitin 6'-sulfate + n adenosine 3',5'-bisphosphate + n H(+). It carries out the reaction 3'-phosphoadenylyl sulfate + keratan = adenosine 3',5'-bisphosphate + keratan 6'-sulfate.. Functionally, sulfotransferase that utilizes 3'-phospho-5'-adenylyl sulfate (PAPS) as sulfonate donor to catalyze the transfer of sulfate to position 6 of the N-acetylgalactosamine (GalNAc) residue of chondroitin. Chondroitin sulfate constitutes the predominant proteoglycan present in cartilage and is distributed on the surfaces of many cells and extracellular matrices. Catalyzes with a lower efficiency the sulfation of Gal residues of keratan sulfate, another glycosaminoglycan. Can also catalyze the sulfation of the Gal residues in sialyl N-acetyllactosamine (sialyl LacNAc) oligosaccharides. This chain is Carbohydrate sulfotransferase 3 (CHST3), found in Tetronarce californica (Pacific electric ray).